The primary structure comprises 219 residues: Mediator of RNA polymerase II transcription subunit 20 (219 aa).

The protein belongs to the Mediator complex subunit 20 family. As to quaternary structure, component of the Mediator complex.

The protein localises to the nucleus. Its function is as follows. Component of the Mediator complex, a coactivator involved in the regulated transcription of nearly all RNA polymerase II-dependent genes. Mediator functions as a bridge to convey information from gene-specific regulatory proteins to the basal RNA polymerase II transcription machinery. Mediator is recruited to promoters by direct interactions with regulatory proteins and serves as a scaffold for the assembly of a functional preinitiation complex with RNA polymerase II and the general transcription factors. In Aedes aegypti (Yellowfever mosquito), this protein is Mediator of RNA polymerase II transcription subunit 20 (MED20).